A 172-amino-acid chain; its full sequence is Ribosome maturation factor RimM (172 aa).

The PRC barrel domain maps to 96–168 (EGEFYYHQII…RVDVELMEGL (73 aa)).

Belongs to the RimM family. As to quaternary structure, binds ribosomal protein uS19.

The protein resides in the cytoplasm. An accessory protein needed during the final step in the assembly of 30S ribosomal subunit, possibly for assembly of the head region. Essential for efficient processing of 16S rRNA. May be needed both before and after RbfA during the maturation of 16S rRNA. It has affinity for free ribosomal 30S subunits but not for 70S ribosomes. This chain is Ribosome maturation factor RimM, found in Streptococcus pyogenes serotype M28 (strain MGAS6180).